A 524-amino-acid polypeptide reads, in one-letter code: Solute carrier family 40 member 1 (524 aa).

Residues 1–18 (MENETELRVVHQEEQQRE) are compositionally biased toward basic and acidic residues. The tract at residues 1–30 (MENETELRVVHQEEQQREEGEDESQPQNPP) is disordered. The next 11 helical transmembrane spans lie at 70–92 (SLLL…GPIV), 109–129 (LLFQ…LLLV), 137–157 (LPVF…GVLS), 191–211 (GIDL…ISFV), 218–238 (ITFA…FISV), 314–334 (VVLP…FGTL), 347–367 (YIIG…TLVY), 380–400 (GLWS…SIWV), 409–429 (MLMA…LAVI), 446–466 (GVQN…GIIV), and 472–492 (FWIL…LYTI).

This sequence belongs to the ferroportin (FP) (TC 2.A.100) family. SLC40A subfamily.

Its subcellular location is the membrane. May be involved in iron transport and iron homeostasis. The polypeptide is Solute carrier family 40 member 1 (IREG1) (Arabidopsis thaliana (Mouse-ear cress)).